Reading from the N-terminus, the 143-residue chain is Large ribosomal subunit protein bL17 (143 aa).

The protein belongs to the bacterial ribosomal protein bL17 family. As to quaternary structure, part of the 50S ribosomal subunit. Contacts protein L32.

In Bartonella quintana (strain Toulouse) (Rochalimaea quintana), this protein is Large ribosomal subunit protein bL17.